Reading from the N-terminus, the 437-residue chain is uncharacterized protein (437 aa).

Helical transmembrane passes span 102–122 and 272–292; these read GIYM…PVII and ILSI…ATVW.

The protein belongs to the herpesviridae UL49 family.

The protein resides in the host membrane. This is an uncharacterized protein from Connochaetes taurinus (Blue wildebeest).